The sequence spans 105 residues: Nitrogen fixation nifHD region GlnB-like protein 1 (105 aa).

This sequence belongs to the P(II) protein family.

In terms of biological role, could be involved in the regulation of nitrogen fixation. In Methanothermococcus thermolithotrophicus (Methanococcus thermolithotrophicus), this protein is Nitrogen fixation nifHD region GlnB-like protein 1 (glnBA).